The primary structure comprises 473 residues: tRNA modification GTPase MnmE (473 aa).

(6S)-5-formyl-5,6,7,8-tetrahydrofolate contacts are provided by arginine 30, glutamate 95, and arginine 134. Positions 230-394 constitute a TrmE-type G domain; that stretch reads GVSTVIAGRP…LKLLMASMVE (165 aa). GTP is bound by residues 240–245, 259–265, and 284–287; these read NAGKST, SHMPGTT, and DTAG. Positions 244 and 265 each coordinate Mg(2+). Residue lysine 473 coordinates (6S)-5-formyl-5,6,7,8-tetrahydrofolate.

The protein belongs to the TRAFAC class TrmE-Era-EngA-EngB-Septin-like GTPase superfamily. TrmE GTPase family. As to quaternary structure, homodimer. Heterotetramer of two MnmE and two MnmG subunits. Requires K(+) as cofactor.

The protein localises to the cytoplasm. Functionally, exhibits a very high intrinsic GTPase hydrolysis rate. Involved in the addition of a carboxymethylaminomethyl (cmnm) group at the wobble position (U34) of certain tRNAs, forming tRNA-cmnm(5)s(2)U34. This Chlorobium luteolum (strain DSM 273 / BCRC 81028 / 2530) (Pelodictyon luteolum) protein is tRNA modification GTPase MnmE.